We begin with the raw amino-acid sequence, 77 residues long: Secapin (77 aa).

Positions 1 to 32 (MKNYSKNATYLITVLLFSFVAMLLIIPSKCEA) are cleaved as a signal peptide. A propeptide spanning residues 33–52 (VSNDMQPLEARTADLVQQPR) is cleaved from the precursor. Cys61 and Cys72 are oxidised to a cystine.

The protein belongs to the secapin family. As to expression, expressed by the venom gland.

It localises to the secreted. Its function is as follows. Nontoxic peptide. This chain is Secapin, found in Apis cerana cerana (Oriental honeybee).